A 195-amino-acid polypeptide reads, in one-letter code: Keratin-associated protein 4-3 (195 aa).

28 consecutive repeat copies span residues 34–38, 39–43, 44–48, 49–53, 54–58, 59–63, 64–68, 69–73, 74–78, 79–83, 84–88, 89–93, 94–98, 99–103, 104–108, 109–113, 114–118, 119–123, 124–128, 129–133, 134–138, 144–148, 149–153, 154–158, 159–163, 164–168, 179–183, and 189–193. The segment at 34 to 193 is 29 X 5 AA repeats of C-C-[GIKRQVH]-[SPT]-[STA]; the sequence is CCRTTCCRPS…CFHPICCGSS (160 aa).

Belongs to the KRTAP type 4 family. In terms of assembly, interacts with hair keratins. In terms of tissue distribution, expressed specifically in the middle/uper portions of the hair cortex. Not detected in the hair matrix or cuticle.

In the hair cortex, hair keratin intermediate filaments are embedded in an interfilamentous matrix, consisting of hair keratin-associated proteins (KRTAP), which are essential for the formation of a rigid and resistant hair shaft through their extensive disulfide bond cross-linking with abundant cysteine residues of hair keratins. The matrix proteins include the high-sulfur and high-glycine-tyrosine keratins. The polypeptide is Keratin-associated protein 4-3 (KRTAP4-3) (Homo sapiens (Human)).